Reading from the N-terminus, the 131-residue chain is Profilin-2 (131 aa).

Belongs to the profilin family. Occurs in many kinds of cells as a complex with monomeric actin in a 1:1 ratio.

The protein resides in the cytoplasm. Its subcellular location is the cytoskeleton. Functionally, binds to actin and affects the structure of the cytoskeleton. At high concentrations, profilin prevents the polymerization of actin, whereas it enhances it at low concentrations. By binding to PIP2, it inhibits the formation of IP3 and DG. In Solanum lycopersicum (Tomato), this protein is Profilin-2.